Here is a 249-residue protein sequence, read N- to C-terminus: MGIKYQKIGDVVIVKKELSEDEIREIVKRTKCKAILLYTTQITGEFRTPHVKILYGKETETIHKEYGCLFKLDVAKIMWSQGNIEERKRMAFISNENEVVVDMFAGIGYFTIPLAKYSKPKLVYAIEKNPTAYHYLCENIKLNKLNNVIPILADNRDVELKDVADRVIMGYVHKTHKFLDKTFEFLKDRGVIHYHETVAEKIMYERPIERLKFYAEKNGYKLIDYEVRKIKKYAPGVWHVVVDAKFERI.

Residues Ser-80, Arg-87, Glu-127, and 154-155 (DN) each bind S-adenosyl-L-methionine.

It belongs to the class I-like SAM-binding methyltransferase superfamily. TRM5/TYW2 family.

The protein resides in the cytoplasm. It catalyses the reaction 4-demethylwyosine(37) in tRNA(Phe) + S-adenosyl-L-methionine = 4-demethyl-7-[(3S)-3-amino-3-carboxypropyl]wyosine(37) in tRNA(Phe) + S-methyl-5'-thioadenosine + H(+). In terms of biological role, S-adenosyl-L-methionine-dependent transferase that acts as a component of the wyosine derivatives biosynthesis pathway. Catalyzes the transfer of the alpha-amino-alpha-carboxypropyl (acp) group from S-adenosyl-L-methionine to 4-demethylwyosine (imG-14), forming 7-aminocarboxypropyl-demethylwyosine (wybutosine-86) at position 37 of tRNA(Phe). The protein is tRNA(Phe) (4-demethylwyosine(37)-C(7)) aminocarboxypropyltransferase of Methanocaldococcus jannaschii (strain ATCC 43067 / DSM 2661 / JAL-1 / JCM 10045 / NBRC 100440) (Methanococcus jannaschii).